The sequence spans 102 residues: Small ribosomal subunit protein uS10 (102 aa).

The protein belongs to the universal ribosomal protein uS10 family. In terms of assembly, part of the 30S ribosomal subunit.

Its function is as follows. Involved in the binding of tRNA to the ribosomes. The chain is Small ribosomal subunit protein uS10 from Methanococcus maripaludis (strain C7 / ATCC BAA-1331).